A 398-amino-acid polypeptide reads, in one-letter code: ATP-dependent RNA helicase fal1 (398 aa).

A Q motif motif is present at residues 24–52 (PTFEDMHLKESLLRGIYAYGYESPSAVQS). The region spanning 55 to 225 (IVQICKGRDT…TKFMTDPVRV (171 aa)) is the Helicase ATP-binding domain. 68–75 (AQSGTGKT) is a binding site for ATP. Residues 173 to 176 (DEAD) carry the DEAD box motif. The Helicase C-terminal domain maps to 236–397 (GIKQYFIAVE…EMPMNVADLL (162 aa)).

This sequence belongs to the DEAD box helicase family. DDX48/FAL1 subfamily.

It localises to the nucleus. Its subcellular location is the nucleolus. The enzyme catalyses ATP + H2O = ADP + phosphate + H(+). Functionally, ATP-dependent RNA helicase involved in 40S ribosomal subunit biogenesis. Required for the processing and cleavage of 35S pre-rRNA at sites A0, A1, and A2, leading to mature 18S rRNA. This is ATP-dependent RNA helicase fal1 (fal1) from Aspergillus oryzae (strain ATCC 42149 / RIB 40) (Yellow koji mold).